The primary structure comprises 1108 residues: DNA-directed RNA polymerase subunit beta (1108 aa).

Residues 1081-1108 (SPRRTPARPTIDYSALDDTDDKEGATTF) are disordered.

The protein belongs to the RNA polymerase beta chain family. In terms of assembly, in cyanobacteria the RNAP catalytic core is composed of 2 alpha, 1 beta, 1 beta', 1 gamma and 1 omega subunit. When a sigma factor is associated with the core the holoenzyme is formed, which can initiate transcription.

It carries out the reaction RNA(n) + a ribonucleoside 5'-triphosphate = RNA(n+1) + diphosphate. Functionally, DNA-dependent RNA polymerase catalyzes the transcription of DNA into RNA using the four ribonucleoside triphosphates as substrates. This is DNA-directed RNA polymerase subunit beta from Thermosynechococcus vestitus (strain NIES-2133 / IAM M-273 / BP-1).